The chain runs to 440 residues: UDP-glycosyltransferase 87A1 (440 aa).

Residues Ser-263, 312-314 (CDQ), 329-337 (HCGYNSTLE), and 351-354 (FWDQ) each bind UDP-alpha-D-glucose.

The protein belongs to the UDP-glycosyltransferase family.

This Arabidopsis thaliana (Mouse-ear cress) protein is UDP-glycosyltransferase 87A1 (UGT87A1).